We begin with the raw amino-acid sequence, 592 residues long: Cytosolic purine 5'-nucleotidase (592 aa).

The segment covering M1–N15 has biased composition (low complexity). The disordered stretch occupies residues M1–L37. The active-site Nucleophile is D122. 2 residues coordinate IMP: D122 and D124. 2 residues coordinate Mg(2+): D122 and D124. D124 acts as the Proton donor in catalysis. Position 226 (N226) interacts with ATP. The interval L252–S273 is disordered. Over residues E259–S273 the composition is skewed to polar residues. Positions 299, 303, 312, 347, 348, 349, and 385 each coordinate IMP. D444 contacts Mg(2+). ATP is bound by residues Q547 and R550.

Belongs to the 5'(3')-deoxyribonucleotidase family. Homotetramer. Mg(2+) is required as a cofactor.

It is found in the cytoplasm. Its subcellular location is the cytosol. It catalyses the reaction a ribonucleoside 5'-phosphate + H2O = a ribonucleoside + phosphate. It carries out the reaction a 2'-deoxyribonucleoside + a ribonucleoside 5'-phosphate = a ribonucleoside + a 2'-deoxyribonucleoside 5'-phosphate. Broad specificity cytosolic 5'-nucleotidase that catalyzes the dephosphorylation of 6-hydroxypurine nucleoside 5'-monophosphates. In addition, possesses a phosphotransferase activity by which it can transfer a phosphate from a donor nucleoside monophosphate to an acceptor nucleoside. Through these activities regulates the purine nucleoside/nucleotide pools within the cell. This is Cytosolic purine 5'-nucleotidase (nt5c2) from Dictyostelium discoideum (Social amoeba).